Here is a 191-residue protein sequence, read N- to C-terminus: uncharacterized protein (191 aa).

This is an uncharacterized protein from Schizosaccharomyces pombe (strain 972 / ATCC 24843) (Fission yeast).